We begin with the raw amino-acid sequence, 529 residues long: Bifunctional purine biosynthesis protein PurH (529 aa).

One can recognise an MGS-like domain in the interval 1-148; that stretch reads MQQRRSVRRA…KNHKDVAIVV (148 aa).

Belongs to the PurH family.

The catalysed reaction is (6R)-10-formyltetrahydrofolate + 5-amino-1-(5-phospho-beta-D-ribosyl)imidazole-4-carboxamide = 5-formamido-1-(5-phospho-D-ribosyl)imidazole-4-carboxamide + (6S)-5,6,7,8-tetrahydrofolate. It carries out the reaction IMP + H2O = 5-formamido-1-(5-phospho-D-ribosyl)imidazole-4-carboxamide. The protein operates within purine metabolism; IMP biosynthesis via de novo pathway; 5-formamido-1-(5-phospho-D-ribosyl)imidazole-4-carboxamide from 5-amino-1-(5-phospho-D-ribosyl)imidazole-4-carboxamide (10-formyl THF route): step 1/1. It participates in purine metabolism; IMP biosynthesis via de novo pathway; IMP from 5-formamido-1-(5-phospho-D-ribosyl)imidazole-4-carboxamide: step 1/1. The chain is Bifunctional purine biosynthesis protein PurH from Salmonella arizonae (strain ATCC BAA-731 / CDC346-86 / RSK2980).